Consider the following 586-residue polypeptide: Clathrin heavy chain linker domain-containing protein 1 (586 aa).

The stretch at 174–232 forms a coiled coil; that stretch reads MNLDALTKYMKHLEDKYAEIKQAMLIKYVPAQRKSDLDEEMIVLLKRRDVAENLNRKLQ.

This chain is Clathrin heavy chain linker domain-containing protein 1 (CLHC1), found in Macaca fascicularis (Crab-eating macaque).